The primary structure comprises 662 residues: MVSQSTVRQDSPVEPWEGISDHSGIIDGSPRLLNTDHPPCQLDIRLMRHKAVWINPQDVQQQPQDLQSQVPAAGNSGTHFVTDAASPSGPSPSCLGDSLAETTLSEDTTDSVGSASPHGSSEKSSSFSLSSTEVHMVRPGYSHRVSLPTSPGILATSPYPETDSAFFEPSHLTSAADEGAVQVSRRTISSNSFSPEVFVLPVDVEKENAHFYVADMIISAMEKMKCNILSQQQTESWSKEVSGLLGSDQPDSEMTFDTNIKQESGSSTSSYSGYEGCAVLQVSPVTETRTYHDVKEICKCDVDEFVILELGDFNDITETCSCSCSSSKSVTYEPDFNSAELLAKELYRVFQKCWILSVVNSQLAGSLSAAGSIVVNEECVRKDFESSMNVVQEIKFKSRIRGTEDWAPPRFQIIFNIHPPLKRDLVVAAQNFFCAGCGTPVEPKFVKRLRYCEYLGKYFCDCCHSYAESCIPARILMMWDFKKYYVSNFSKQLLDSIWHQPIFNLLSIGQSLYAKAKELDRVKEIQEQLFHIKKLLKTCRFANSALKEFEQVPGHLTDELHLFSLEDLVRIKKGLLAPLLKDILKASLAHVAGCELCQGKGFICEFCQNTTVIFPFQTATCRRCSACRACFHKQCFQSSECPRCARITARRKLLESVASAAT.

2 disordered regions span residues Met1–Asn34 and Asp58–Ser131. The span at Asp58 to Pro71 shows a compositional bias: low complexity. Residues Ala100–Gly113 show a composition bias toward polar residues. Low complexity predominate over residues Ser114–Ser131. A Phosphoserine; by MTOR modification is found at Ser157. The interval Glu196 to Glu235 is interaction with UVRAG. N6-acetyllysine occurs at positions 483, 523, 533, 573, and 633.

As to quaternary structure, interacts with UVRAG; the interaction is direct and promotes association with the PI3K/PI3KC3 and HOPS complexes. Interacts with STX17. In terms of processing, phosphorylated by MTOR at Ser-157 under nutrient-rich conditions. Phosphorylation prevents acetylation by KAT5/TIP60 and impairs RUBCNL/PACER function and autophagosome maturation. Under autophagy induction, Phosphorylation by MTOR is repressed, enabling acetylation by KAT5/TIP60. Acetylated by KAT5/TIP60 under autophagy induction, promoting autophagosome maturation and lipid metabolism. Acetylation is prevented by phosphorylation by MTOR. Lys-483 and Lys-573 constitute the key sites for tuning function in autophagy. Expressed weakly in cervical carcinoma cell lines.

The protein resides in the cytoplasmic vesicle. It localises to the autophagosome membrane. Regulator of autophagy that promotes autophagosome maturation by facilitating the biogenesis of phosphatidylinositol 3-phosphate (PtdIns(3)P) in late steps of autophagy. Acts by antagonizing RUBCN, thereby stimulating phosphatidylinositol 3-kinase activity of the PI3K/PI3KC3 complex. Following anchorage to the autophagosomal SNARE STX17, promotes the recruitment of PI3K/PI3KC3 and HOPS complexes to the autophagosome to regulate the fusion specificity of autophagosomes with late endosomes/lysosomes. Binds phosphoinositides phosphatidylinositol 3-phosphate (PtdIns(3)P), 4-phosphate (PtdIns(4)P) and 5-phosphate (PtdIns(5)P). In addition to its role in autophagy, acts as a regulator of lipid and glycogen homeostasis. May act as a tumor suppressor. This Homo sapiens (Human) protein is Protein associated with UVRAG as autophagy enhancer.